The primary structure comprises 432 residues: Phosphomethylpyrimidine synthase (432 aa).

Substrate contacts are provided by residues Asn-66, Met-95, Tyr-124, His-163, Ser-185 to Gly-187, Asp-226 to Arg-229, and Glu-265. Zn(2+) is bound at residue His-269. Tyr-292 contributes to the substrate binding site. His-333 contributes to the Zn(2+) binding site. The [4Fe-4S] cluster site is built by Cys-409, Cys-412, and Cys-416.

Belongs to the ThiC family. The cofactor is [4Fe-4S] cluster.

The catalysed reaction is 5-amino-1-(5-phospho-beta-D-ribosyl)imidazole + S-adenosyl-L-methionine = 4-amino-2-methyl-5-(phosphooxymethyl)pyrimidine + CO + 5'-deoxyadenosine + formate + L-methionine + 3 H(+). It functions in the pathway cofactor biosynthesis; thiamine diphosphate biosynthesis. Functionally, catalyzes the synthesis of the hydroxymethylpyrimidine phosphate (HMP-P) moiety of thiamine from aminoimidazole ribotide (AIR) in a radical S-adenosyl-L-methionine (SAM)-dependent reaction. In Thermoanaerobacter pseudethanolicus (strain ATCC 33223 / 39E) (Clostridium thermohydrosulfuricum), this protein is Phosphomethylpyrimidine synthase.